The chain runs to 307 residues: N-acetylglucosamine-1-phosphotransferase subunit gamma (307 aa).

An N-terminal signal peptide occupies residues 1–24 (MAGRLAGFLMLLGLASQGPAPAYA). The MRH domain occupies 69–171 (GKCFSLVEST…TFETPLVCHP (103 aa)). Cys71 and Cys84 are disulfide-bonded. Residues Asn88 and Asn115 are each glycosylated (N-linked (GlcNAc...) asparagine). Intrachain disulfides connect Cys129/Cys157 and Cys142/Cys169. Positions 176–279 (VYPTLSEALQ…HTQPTETTHS (104 aa)) constitute a DMAP1-binding domain.

As to quaternary structure, homodimer; disulfide-linked. Hexamer of two alpha (GNPTAB), two beta (GNPTAB) and two gamma (GNPTG) subunits; disulfide-linked. The alpha and/or the beta subunits of the enzyme constitute the catalytic subunits. Post-translationally, cys-245 mediates the formation of the interchain disulfide bond for formation of the homodimer. Cys-142, Cys-157 and Cys-169 are involved in intramolecular disulfide bonds formation. Widely expressed. Highly expressed in the liver, intestine, brain, thymus, testis and ovary.

The protein resides in the secreted. Its subcellular location is the golgi apparatus. Its function is as follows. Non-catalytic subunit of the N-acetylglucosamine-1-phosphotransferase complex, an enzyme that catalyzes the formation of mannose 6-phosphate (M6P) markers on high mannose type oligosaccharides in the Golgi apparatus. Binds and presents the high mannose glycans of the acceptor to the catalytic alpha and beta subunits (GNPTAB). Enhances the rate of N-acetylglucosamine-1-phosphate transfer to the oligosaccharides of acid hydrolase acceptors. This chain is N-acetylglucosamine-1-phosphotransferase subunit gamma (Gnptg), found in Mus musculus (Mouse).